We begin with the raw amino-acid sequence, 204 residues long: Putative F-box protein L168 (204 aa).

An F-box domain is found at 1–46 (MNLCDLFDEIIIGIIDELSDRDKIKFMTTCSRFYYFIDKTKYFDIY). Residues 161–184 (NETNKITNNHTNKKINNNKKHQNN) are disordered. Residues 171 to 183 (TNKKINNNKKHQN) show a composition bias toward basic residues.

This chain is Putative F-box protein L168, found in Acanthamoeba polyphaga (Amoeba).